A 547-amino-acid polypeptide reads, in one-letter code: Chaperonin GroEL (547 aa).

Residues threonine 30–proline 33, lysine 51, aspartate 87–threonine 91, glycine 415, and aspartate 495 contribute to the ATP site.

It belongs to the chaperonin (HSP60) family. In terms of assembly, forms a cylinder of 14 subunits composed of two heptameric rings stacked back-to-back. Interacts with the co-chaperonin GroES.

The protein resides in the cytoplasm. It carries out the reaction ATP + H2O + a folded polypeptide = ADP + phosphate + an unfolded polypeptide.. Together with its co-chaperonin GroES, plays an essential role in assisting protein folding. The GroEL-GroES system forms a nano-cage that allows encapsulation of the non-native substrate proteins and provides a physical environment optimized to promote and accelerate protein folding. The polypeptide is Chaperonin GroEL (Shewanella halifaxensis (strain HAW-EB4)).